The chain runs to 378 residues: Small ribosomal subunit protein bS1 (378 aa).

S1 motif domains lie at 1 to 66 (ETVT…VSRR), 87 to 155 (GMEV…LGLK), 172 to 242 (GTKL…LGLK), 259 to 329 (GDRV…LGVK), and 346 to 378 (GAIV…ASEA).

It belongs to the bacterial ribosomal protein bS1 family.

In terms of biological role, binds mRNA; thus facilitating recognition of the initiation point. It is needed to translate mRNA with a short Shine-Dalgarno (SD) purine-rich sequence. This chain is Small ribosomal subunit protein bS1 (rpsA), found in Providencia sp.